The primary structure comprises 260 residues: Collagenase (260 aa).

Positions 1 to 16 are cleaved as a signal peptide; sequence MKFLLVFALALATTSA. The propeptide occupies 17–30; that stretch reads FQHPASIFELREGR. One can recognise a Peptidase S1 domain in the interval 31–257; it reads IINGYEAYTG…YMDWIQQNTG (227 aa). Cysteines 60 and 76 form a disulfide. Residues His75 and Asp118 each act as charge relay system in the active site. Cystine bridges form between Cys181-Cys196 and Cys206-Cys234. The active-site Charge relay system is Ser210.

This sequence belongs to the peptidase S1 family.

The protein localises to the secreted. The catalysed reaction is Hydrolysis of proteins including native collagen at Xaa-|-Ala bond leaving an N-terminal (75%) and a C-terminal (25%) fragment.. Inhibited by diisopropylfluorophosphate. Functionally, this enzyme is a serine protease capable of degrading the native triple helix of collagen. Also cleaves the B chain of insulin at the 15-Leu-|-Try-16 and 22-Arg-|-Gly-23 bonds. Hydrolyzes casein, but not Px-Pro-Leu-Gly-Pro-DArg, BzArgNHPh, AcTyrNHPh, 2-naphthyl phosphate, 2-naphthyl butyrate, 2-naphthyl caprylate, 2-naphthyl myristate, L-leucine 2-2-naphthylamide, L-valine 2-naphthylamide, L-cysteine 2-naphthylamide or L-glutarylphenylalanine 2-naphthylamide. This is Collagenase from Hypoderma lineatum (Early cattle grub).